A 328-amino-acid chain; its full sequence is dTDP-4-dehydrorhamnose 3,5-epimerase (328 aa).

Substrate-binding positions include Arg23, Glu28, 46-48, and Arg58; that span reads QEN. The active-site Proton acceptor is His61. Lys70 and His117 together coordinate substrate. The active-site Proton donor is the Tyr130. The substrate site is built by Glu141 and Lys166.

The protein belongs to the dTDP-4-dehydrorhamnose 3,5-epimerase family. As to quaternary structure, homodimer.

It catalyses the reaction dTDP-4-dehydro-6-deoxy-alpha-D-glucose = dTDP-4-dehydro-beta-L-rhamnose. It participates in carbohydrate biosynthesis; dTDP-L-rhamnose biosynthesis. Its pathway is bacterial outer membrane biogenesis; LPS O-antigen biosynthesis. Functionally, catalyzes the epimerization of the C3' and C5'positions of dTDP-6-deoxy-D-xylo-4-hexulose, forming dTDP-6-deoxy-L-lyxo-4-hexulose. The protein is dTDP-4-dehydrorhamnose 3,5-epimerase (rfbC) of Neisseria gonorrhoeae.